A 392-amino-acid chain; its full sequence is Formate-dependent phosphoribosylglycinamide formyltransferase (392 aa).

Residues 15–16 (EL) and E75 each bind N(1)-(5-phospho-beta-D-ribosyl)glycinamide. Residues R107, K148, 153–158 (SSGKGQ), 188–191 (EEFL), and E196 each bind ATP. Residues 112-302 (DLAAGELNLR…EFELHLRAVL (191 aa)) form the ATP-grasp domain. The Mg(2+) site is built by E261 and E273. N(1)-(5-phospho-beta-D-ribosyl)glycinamide-binding positions include D280, K350, and 357–358 (RR).

Belongs to the PurK/PurT family. Homodimer.

The catalysed reaction is N(1)-(5-phospho-beta-D-ribosyl)glycinamide + formate + ATP = N(2)-formyl-N(1)-(5-phospho-beta-D-ribosyl)glycinamide + ADP + phosphate + H(+). It participates in purine metabolism; IMP biosynthesis via de novo pathway; N(2)-formyl-N(1)-(5-phospho-D-ribosyl)glycinamide from N(1)-(5-phospho-D-ribosyl)glycinamide (formate route): step 1/1. Functionally, involved in the de novo purine biosynthesis. Catalyzes the transfer of formate to 5-phospho-ribosyl-glycinamide (GAR), producing 5-phospho-ribosyl-N-formylglycinamide (FGAR). Formate is provided by PurU via hydrolysis of 10-formyl-tetrahydrofolate. The protein is Formate-dependent phosphoribosylglycinamide formyltransferase of Synechococcus sp. (strain CC9605).